We begin with the raw amino-acid sequence, 120 residues long: Putative membrane protein insertion efficiency factor (120 aa).

The interval glycine 93–valine 120 is disordered.

It belongs to the UPF0161 family.

The protein resides in the cell membrane. Functionally, could be involved in insertion of integral membrane proteins into the membrane. The protein is Putative membrane protein insertion efficiency factor of Mycobacterium bovis (strain ATCC BAA-935 / AF2122/97).